We begin with the raw amino-acid sequence, 475 residues long: MKWEVVIGIEVHVQLNTASKIFSGASTAFGAEPNTQASAVELALPGVLPVLNRAVVDKAIRLGLALDANINQKNVFARKNYFYPDLPKGYQISQMDLPIVEHGKLKILVGDQEKVIGVTRAHMEEDAGKSLHEDFQGLSGIDLNRAGTPLLEVVSEPDMRSVDEALAYVKALYTLVTWLGICDGNMQEGSFRMDVNVSVRPEGQKEFGTRREIKNLNSFRFLEQAAKYEIQWQIDTLEDGGKVQQATVLFDPDTGETRMMRSKEDAHDYRYFPDPDLLPVRISDEQVARIKGEMPELPGAMQARFVDAYGVSAYDAALLTSSLAQAQYFEAVAKASGQGKLAANWINGEIAARLNRDGKDILDCPISAERLSGLIARIADNTLSSKLAKQVFDALWDSELSADAIIERDGLKQVSDVGAIEKMVEEAIAANPKAVEEFRAGKEKALNALAGQVMKASKGKANPAQVQDILRQKLS.

It belongs to the GatB/GatE family. GatB subfamily. As to quaternary structure, heterotrimer of A, B and C subunits.

The catalysed reaction is L-glutamyl-tRNA(Gln) + L-glutamine + ATP + H2O = L-glutaminyl-tRNA(Gln) + L-glutamate + ADP + phosphate + H(+). The enzyme catalyses L-aspartyl-tRNA(Asn) + L-glutamine + ATP + H2O = L-asparaginyl-tRNA(Asn) + L-glutamate + ADP + phosphate + 2 H(+). Functionally, allows the formation of correctly charged Asn-tRNA(Asn) or Gln-tRNA(Gln) through the transamidation of misacylated Asp-tRNA(Asn) or Glu-tRNA(Gln) in organisms which lack either or both of asparaginyl-tRNA or glutaminyl-tRNA synthetases. The reaction takes place in the presence of glutamine and ATP through an activated phospho-Asp-tRNA(Asn) or phospho-Glu-tRNA(Gln). The protein is Aspartyl/glutamyl-tRNA(Asn/Gln) amidotransferase subunit B of Chromobacterium violaceum (strain ATCC 12472 / DSM 30191 / JCM 1249 / CCUG 213 / NBRC 12614 / NCIMB 9131 / NCTC 9757 / MK).